A 605-amino-acid chain; its full sequence is MGTERTNPAAPDFETIARNANQLAEVFRQSAAASLKPFEPAGQGALLPGANLQGASEIDEMTRTLTRVAETWLKDPEKALQAQTKLGQSFAALWASTLTRMQGAVTEPVVQPPPTDKRFAHADWSANPVFDLIKQSYLLLGRWAEEMVETAEGIDEHTRHKAEFYLRQLLSAYSPSNFVMTNPELLRQTLEEGGANLMRGMKMLQEDLEAGGGQLRVRQTDLSAFTFGKDVAVTPGEVIFRNDLMELIQYAPTTETVLKRPLLIVPPWINKFYILDLNPQKSLIGWMVSQGITVFVISWVNPDERHRDKDFESYMREGIETAIDMIGVATGETDVAAAGYCVGGTLLAVTLAYQAATGNRRIKSATFLTTQVDFTHAGDLKVFADEGQIKAIEERMAEHGYLEGARMANAFNMLRPNDLIWSYVVNNYVRGKAPAAFDLLYWNADATRMPAANHSFYLRNCYLNNTLAKGQMVLGNVRLDLKKVKVPVFNLATREDHIAPALSVFEGSAKFGGKVDYVLAGSGHIAGVVAPPGPKAKYGFRTGGPARGRFEDWVAAATEHPGSWWPYWYKWLEEQAPERVPARIPGTGALPSLAPAPGTYVRMKA.

An AB hydrolase-1 domain is found at 319–527 (IETAIDMIGV…VLAGSGHIAG (209 aa)). The active site involves C341.

The protein belongs to the PHA/PHB synthase family.

It localises to the cytoplasm. This chain is Poly(3-hydroxyalkanoate) polymerase (phaC), found in Methylorubrum extorquens (Methylobacterium dichloromethanicum).